A 330-amino-acid polypeptide reads, in one-letter code: D-alanine--D-alanine ligase (330 aa).

In terms of domain architecture, ATP-grasp spans 120 to 326 (KLWLSALDIP…FKQFLEGIIR (207 aa)). An ATP-binding site is contributed by 150-205 (AFRNWGAVFVKAASQGSSVGCYKVTDAAKLSEAVNAAFGYSDQVLVEKAVRPRELE). Mg(2+)-binding residues include aspartate 280, glutamate 293, and asparagine 295.

Belongs to the D-alanine--D-alanine ligase family. The cofactor is Mg(2+). Mn(2+) serves as cofactor.

It is found in the cytoplasm. It carries out the reaction 2 D-alanine + ATP = D-alanyl-D-alanine + ADP + phosphate + H(+). The protein operates within cell wall biogenesis; peptidoglycan biosynthesis. Its function is as follows. Cell wall formation. This Tolumonas auensis (strain DSM 9187 / NBRC 110442 / TA 4) protein is D-alanine--D-alanine ligase.